A 516-amino-acid chain; its full sequence is Cytochrome P450 1A2 (516 aa).

Residue Ser-69 is glycosylated (O-linked (GlcNAc) serine). Position 226 (Phe-226) interacts with substrate. Cys-458 lines the heme pocket.

It belongs to the cytochrome P450 family. As to quaternary structure, interacts with PGRMC1; the interaction requires PGRMC1 homodimerization. The cofactor is heme.

It localises to the endoplasmic reticulum membrane. The protein localises to the microsome membrane. The enzyme catalyses an organic molecule + reduced [NADPH--hemoprotein reductase] + O2 = an alcohol + oxidized [NADPH--hemoprotein reductase] + H2O + H(+). It carries out the reaction 17beta-estradiol + reduced [NADPH--hemoprotein reductase] + O2 = 2-hydroxy-17beta-estradiol + oxidized [NADPH--hemoprotein reductase] + H2O + H(+). It catalyses the reaction 17beta-estradiol + reduced [NADPH--hemoprotein reductase] + O2 = 4-hydroxy-17beta-estradiol + oxidized [NADPH--hemoprotein reductase] + H2O + H(+). The catalysed reaction is estrone + reduced [NADPH--hemoprotein reductase] + O2 = 2-hydroxyestrone + oxidized [NADPH--hemoprotein reductase] + H2O + H(+). The enzyme catalyses estrone + reduced [NADPH--hemoprotein reductase] + O2 = 4-hydroxyestrone + oxidized [NADPH--hemoprotein reductase] + H2O + H(+). It carries out the reaction cholesterol + reduced [NADPH--hemoprotein reductase] + O2 = 25-hydroxycholesterol + oxidized [NADPH--hemoprotein reductase] + H2O + H(+). It catalyses the reaction all-trans-retinol + reduced [NADPH--hemoprotein reductase] + O2 = all-trans-retinal + oxidized [NADPH--hemoprotein reductase] + 2 H2O + H(+). The catalysed reaction is all-trans-retinal + reduced [NADPH--hemoprotein reductase] + O2 = all-trans-retinoate + oxidized [NADPH--hemoprotein reductase] + H2O + 2 H(+). The enzyme catalyses (5Z,8Z,11Z,14Z)-eicosatetraenoate + reduced [NADPH--hemoprotein reductase] + O2 = (14R,15S)-epoxy-(5Z,8Z,11Z)-eicosatrienoate + oxidized [NADPH--hemoprotein reductase] + H2O + H(+). It carries out the reaction (5Z,8Z,11Z,14Z)-eicosatetraenoate + reduced [NADPH--hemoprotein reductase] + O2 = (14S,15R)-epoxy-(5Z,8Z,11Z)-eicosatrienoate + oxidized [NADPH--hemoprotein reductase] + H2O + H(+). It catalyses the reaction (5Z,8Z,11Z,14Z,17Z)-eicosapentaenoate + reduced [NADPH--hemoprotein reductase] + O2 = (17R,18S)-epoxy-(5Z,8Z,11Z,14Z)-eicosatetraenoate + oxidized [NADPH--hemoprotein reductase] + H2O + H(+). The catalysed reaction is (4Z,7Z,10Z,13Z,16Z,19Z)-docosahexaenoate + reduced [NADPH--hemoprotein reductase] + O2 = (19R,20S)-epoxy-(4Z,7Z,10Z,13Z,16Z)-docosapentaenoate + oxidized [NADPH--hemoprotein reductase] + H2O + H(+). The enzyme catalyses (5S)-hydroperoxy-(6E,8Z,11Z,14Z)-eicosatetraenoate = 5-oxo-(6E,8Z,11Z,14Z)-eicosatetraenoate + H2O. It carries out the reaction (12S)-hydroperoxy-(5Z,8Z,10E,14Z)-eicosatetraenoate = 12-oxo-(5Z,8Z,10E,14Z)-eicosatetraenoate + H2O. It catalyses the reaction (15S)-hydroperoxy-(5Z,8Z,11Z,13E)-eicosatetraenoate = 15-oxo-(5Z,8Z,11Z,13E)-eicosatetraenoate + H2O. The catalysed reaction is (13S)-hydroperoxy-(9Z,11E)-octadecadienoate = 13-oxo-(9Z,11E)-octadecadienoate + H2O. The enzyme catalyses (5Z,8Z,11Z,14Z)-eicosatetraenoate + reduced [NADPH--hemoprotein reductase] + O2 = 13-hydroxy-(5Z,8Z,11Z,14Z)-eicosatetraenoate + oxidized [NADPH--hemoprotein reductase] + H2O + H(+). It carries out the reaction (5Z,8Z,11Z,14Z)-eicosatetraenoate + reduced [NADPH--hemoprotein reductase] + O2 = 19-hydroxy-(5Z,8Z,11Z,14Z)-eicosatetraenoate + oxidized [NADPH--hemoprotein reductase] + H2O + H(+). It catalyses the reaction (9Z,12Z)-octadecadienoate + reduced [NADPH--hemoprotein reductase] + O2 = 11-hydroxy-(9Z,12Z)-octadecadienoate + oxidized [NADPH--hemoprotein reductase] + H2O + H(+). Its pathway is cofactor metabolism; retinol metabolism. The protein operates within steroid metabolism; cholesterol metabolism. It functions in the pathway lipid metabolism; arachidonate metabolism. Its function is as follows. A cytochrome P450 monooxygenase involved in the metabolism of various endogenous substrates, including fatty acids, steroid hormones and vitamins. Mechanistically, uses molecular oxygen inserting one oxygen atom into a substrate, and reducing the second into a water molecule, with two electrons provided by NADPH via cytochrome P450 reductase (NADPH--hemoprotein reductase). Catalyzes the hydroxylation of carbon-hydrogen bonds. Exhibits high catalytic activity for the formation of hydroxyestrogens from estrone (E1) and 17beta-estradiol (E2), namely 2-hydroxy E1 and E2. Metabolizes cholesterol toward 25-hydroxycholesterol, a physiological regulator of cellular cholesterol homeostasis. May act as a major enzyme for all-trans retinoic acid biosynthesis in the liver. Catalyzes two successive oxidative transformation of all-trans retinol to all-trans retinal and then to the active form all-trans retinoic acid. Primarily catalyzes stereoselective epoxidation of the last double bond of polyunsaturated fatty acids (PUFA), displaying a strong preference for the (R,S) stereoisomer. Catalyzes bisallylic hydroxylation and omega-1 hydroxylation of PUFA. May also participate in eicosanoids metabolism by converting hydroperoxide species into oxo metabolites (lipoxygenase-like reaction, NADPH-independent). Plays a role in the oxidative metabolism of xenobiotics. Catalyzes the N-hydroxylation of heterocyclic amines and the O-deethylation of phenacetin. Metabolizes caffeine via N3-demethylation. This is Cytochrome P450 1A2 (CYP1A2) from Balaenoptera acutorostrata (Common minke whale).